A 309-amino-acid chain; its full sequence is uncharacterized protein (309 aa).

Basic residues predominate over residues M1–V11. The disordered stretch occupies residues M1–T69. The S-adenosyl-L-methionine site is built by G261, I281, and L290.

Belongs to the class IV-like SAM-binding methyltransferase superfamily. RNA methyltransferase TrmH family.

This is an uncharacterized protein from Mycobacterium leprae (strain TN).